Reading from the N-terminus, the 274-residue chain is Thymidylate synthase (274 aa).

Arg21 contacts dUMP. Residue His51 participates in (6R)-5,10-methylene-5,6,7,8-tetrahydrofolate binding. 123–124 contributes to the dUMP binding site; that stretch reads RR. Cys156 acts as the Nucleophile in catalysis. Residues 176–179, Asn187, and 217–219 each bind dUMP; these read RSAD and HIY. Asp179 is a binding site for (6R)-5,10-methylene-5,6,7,8-tetrahydrofolate. A (6R)-5,10-methylene-5,6,7,8-tetrahydrofolate-binding site is contributed by Ala273.

Belongs to the thymidylate synthase family. Bacterial-type ThyA subfamily. In terms of assembly, homodimer.

The protein resides in the cytoplasm. The catalysed reaction is dUMP + (6R)-5,10-methylene-5,6,7,8-tetrahydrofolate = 7,8-dihydrofolate + dTMP. It functions in the pathway pyrimidine metabolism; dTTP biosynthesis. Its function is as follows. Catalyzes the reductive methylation of 2'-deoxyuridine-5'-monophosphate (dUMP) to 2'-deoxythymidine-5'-monophosphate (dTMP) while utilizing 5,10-methylenetetrahydrofolate (mTHF) as the methyl donor and reductant in the reaction, yielding dihydrofolate (DHF) as a by-product. This enzymatic reaction provides an intracellular de novo source of dTMP, an essential precursor for DNA biosynthesis. This Christiangramia forsetii (strain DSM 17595 / CGMCC 1.15422 / KT0803) (Gramella forsetii) protein is Thymidylate synthase.